A 545-amino-acid polypeptide reads, in one-letter code: Chaperonin GroEL 3 (545 aa).

Residues 30–33 (TLGP), K51, 87–91 (DGTTT), G415, and D496 each bind ATP.

It belongs to the chaperonin (HSP60) family. In terms of assembly, forms a cylinder of 14 subunits composed of two heptameric rings stacked back-to-back. Interacts with the co-chaperonin GroES.

It is found in the cytoplasm. The enzyme catalyses ATP + H2O + a folded polypeptide = ADP + phosphate + an unfolded polypeptide.. Its function is as follows. Together with its co-chaperonin GroES, plays an essential role in assisting protein folding. The GroEL-GroES system forms a nano-cage that allows encapsulation of the non-native substrate proteins and provides a physical environment optimized to promote and accelerate protein folding. The chain is Chaperonin GroEL 3 from Nitrobacter hamburgensis (strain DSM 10229 / NCIMB 13809 / X14).